A 185-amino-acid polypeptide reads, in one-letter code: Peptidyl-tRNA hydrolase (185 aa).

Tyrosine 14 contributes to the tRNA binding site. The Proton acceptor role is filled by histidine 19. The tRNA site is built by tyrosine 65, asparagine 67, and asparagine 113.

This sequence belongs to the PTH family. Monomer.

It is found in the cytoplasm. It carries out the reaction an N-acyl-L-alpha-aminoacyl-tRNA + H2O = an N-acyl-L-amino acid + a tRNA + H(+). In terms of biological role, hydrolyzes ribosome-free peptidyl-tRNAs (with 1 or more amino acids incorporated), which drop off the ribosome during protein synthesis, or as a result of ribosome stalling. Functionally, catalyzes the release of premature peptidyl moieties from peptidyl-tRNA molecules trapped in stalled 50S ribosomal subunits, and thus maintains levels of free tRNAs and 50S ribosomes. This chain is Peptidyl-tRNA hydrolase, found in Rickettsia bellii (strain RML369-C).